The sequence spans 321 residues: MGVYHISGVGFRPGAVTVPLTAVYTLQIAQALGIEEAKEFFKYSSEAEKKGSYEMTKGIPEVLVVFTSRDVIEGRKKLEYKSNWFSLSGGSEEKVEKPIVKYLKKLFRHIEKNFNLEFCLKKFYLVKVDHQNFDDCFEKIGVILRALKDKEVWGNMIGGTNQINLAMLTAGAYTATISKYYYLFQNDVALMEPEWIDKPSNKNIRQATIEILKKWQELPIFNLEMGSIMKDISNLFGGRGFVNIREVERILENYGLGKQFLTKFRGRILEFEEDKVSKGIMFDKIVNLWNLISDVDVRNVLREWKDTGVIREVDINEIRCD.

This is an uncharacterized protein from Archaeoglobus fulgidus (strain ATCC 49558 / DSM 4304 / JCM 9628 / NBRC 100126 / VC-16).